Here is a 101-residue protein sequence, read N- to C-terminus: Protein Tat (101 aa).

The interaction with human CREBBP stretch occupies residues 1–24 (MEPVDPNREPWNHPGSQPKTACTN). The segment at 1–48 (MEPVDPNREPWNHPGSQPKTACTNCYCKKCCYHCQVCFLQKGLGISYG) is transactivation. The Zn(2+) site is built by cysteine 22, cysteine 25, and cysteine 27. The interval 22-37 (CTNCYCKKCCYHCQVC) is cysteine-rich. Lysine 28 carries the post-translational modification N6-acetyllysine; by host PCAF. Cysteine 30, histidine 33, cysteine 34, and cysteine 37 together coordinate Zn(2+). The tract at residues 38 to 48 (FLQKGLGISYG) is core. A disordered region spans residues 48-101 (GRKKRRQRRSAPPGSKNHQDLIPEQPLFQTQRKPTGPEESKKEVESKAEPDRFD). The Nuclear localization signal, RNA-binding (TAR), and protein transduction motif lies at 49–57 (RKKRRQRRS). The tract at residues 49–86 (RKKRRQRRSAPPGSKNHQDLIPEQPLFQTQRKPTGPEE) is interaction with the host capping enzyme RNGTT. N6-acetyllysine; by host EP300 and GCN5L2 occurs at positions 50 and 51. Asymmetric dimethylarginine; by host PRMT6 is present on residues arginine 52 and arginine 53. Positions 82 to 101 (TGPEESKKEVESKAEPDRFD) are enriched in basic and acidic residues.

This sequence belongs to the lentiviruses Tat family. Interacts with host CCNT1. Associates with the P-TEFb complex composed at least of Tat, P-TEFb (CDK9 and CCNT1), TAR RNA, RNA Pol II. Recruits the HATs CREBBP, TAF1/TFIID, EP300, PCAF and GCN5L2. Interacts with host KAT5/Tip60; this interaction targets the latter to degradation. Interacts with the host deacetylase SIRT1. Interacts with host capping enzyme RNGTT; this interaction stimulates RNGTT. Binds to host KDR, and to the host integrins ITGAV/ITGB3 and ITGA5/ITGB1. Interacts with host KPNB1/importin beta-1 without previous binding to KPNA1/importin alpha-1. Interacts with EIF2AK2. Interacts with host nucleosome assembly protein NAP1L1; this interaction may be required for the transport of Tat within the nucleus, since the two proteins interact at the nuclear rim. Interacts with host C1QBP/SF2P32; this interaction involves lysine-acetylated Tat. Interacts with the host chemokine receptors CCR2, CCR3 and CXCR4. Interacts with host DPP4/CD26; this interaction may trigger an anti-proliferative effect. Interacts with host LDLR. Interacts with the host extracellular matrix metalloproteinase MMP1. Interacts with host PRMT6; this interaction mediates Tat's methylation. Interacts with, and is ubiquitinated by MDM2/Hdm2. Interacts with host PSMC3 and HTATIP2. Interacts with STAB1; this interaction may overcome SATB1-mediated repression of IL2 and IL2RA (interleukin) in T cells by binding to the same domain than HDAC1. Interacts (when acetylated) with human CDK13, thereby increasing HIV-1 mRNA splicing and promoting the production of the doubly spliced HIV-1 protein Nef. Interacts with host TBP; this interaction modulates the activity of transcriptional pre-initiation complex. Interacts with host RELA. Interacts with host PLSCR1; this interaction negatively regulates Tat transactivation activity by altering its subcellular distribution. Asymmetrical arginine methylation by host PRMT6 seems to diminish the transactivation capacity of Tat and affects the interaction with host CCNT1. In terms of processing, acetylation by EP300, CREBBP, GCN5L2/GCN5 and PCAF regulates the transactivation activity of Tat. EP300-mediated acetylation of Lys-50 promotes dissociation of Tat from the TAR RNA through the competitive binding to PCAF's bromodomain. In addition, the non-acetylated Tat's N-terminus can also interact with PCAF. PCAF-mediated acetylation of Lys-28 enhances Tat's binding to CCNT1. Lys-50 is deacetylated by SIRT1. Post-translationally, polyubiquitination by host MDM2 does not target Tat to degradation, but activates its transactivation function and fosters interaction with CCNT1 and TAR RNA. Phosphorylated by EIF2AK2 on serine and threonine residues adjacent to the basic region important for TAR RNA binding and function. Phosphorylation of Tat by EIF2AK2 is dependent on the prior activation of EIF2AK2 by dsRNA.

It is found in the host nucleus. The protein localises to the host nucleolus. It localises to the host cytoplasm. Its subcellular location is the secreted. Transcriptional activator that increases RNA Pol II processivity, thereby increasing the level of full-length viral transcripts. Recognizes a hairpin structure at the 5'-LTR of the nascent viral mRNAs referred to as the transactivation responsive RNA element (TAR) and recruits the cyclin T1-CDK9 complex (P-TEFb complex) that will in turn hyperphosphorylate the RNA polymerase II to allow efficient elongation. The CDK9 component of P-TEFb and other Tat-activated kinases hyperphosphorylate the C-terminus of RNA Pol II that becomes stabilized and much more processive. Other factors such as HTATSF1/Tat-SF1, SUPT5H/SPT5, and HTATIP2 are also important for Tat's function. Besides its effect on RNA Pol II processivity, Tat induces chromatin remodeling of proviral genes by recruiting the histone acetyltransferases (HATs) CREBBP, EP300 and PCAF to the chromatin. This also contributes to the increase in proviral transcription rate, especially when the provirus integrates in transcriptionally silent region of the host genome. To ensure maximal activation of the LTR, Tat mediates nuclear translocation of NF-kappa-B by interacting with host RELA. Through its interaction with host TBP, Tat may also modulate transcription initiation. Tat can reactivate a latently infected cell by penetrating in it and transactivating its LTR promoter. In the cytoplasm, Tat is thought to act as a translational activator of HIV-1 mRNAs. Functionally, extracellular circulating Tat can be endocytosed by surrounding uninfected cells via the binding to several surface receptors such as CD26, CXCR4, heparan sulfate proteoglycans (HSPG) or LDLR. Neurons are rarely infected, but they internalize Tat via their LDLR. Through its interaction with nuclear HATs, Tat is potentially able to control the acetylation-dependent cellular gene expression. Modulates the expression of many cellular genes involved in cell survival, proliferation or in coding for cytokines or cytokine receptors. Tat plays a role in T-cell and neurons apoptosis. Tat induced neurotoxicity and apoptosis probably contribute to neuroAIDS. Circulating Tat also acts as a chemokine-like and/or growth factor-like molecule that binds to specific receptors on the surface of the cells, affecting many cellular pathways. In the vascular system, Tat binds to ITGAV/ITGB3 and ITGA5/ITGB1 integrins dimers at the surface of endothelial cells and competes with bFGF for heparin-binding sites, leading to an excess of soluble bFGF. This chain is Protein Tat, found in Human immunodeficiency virus type 1 group M subtype J (isolate SE9173) (HIV-1).